We begin with the raw amino-acid sequence, 275 residues long: tRNA pseudouridine synthase A (275 aa).

The active-site Nucleophile is D56. Y110 is a binding site for substrate.

This sequence belongs to the tRNA pseudouridine synthase TruA family.

It carries out the reaction uridine(38/39/40) in tRNA = pseudouridine(38/39/40) in tRNA. In terms of biological role, formation of pseudouridine at positions 38, 39 and 40 in the anticodon stem and loop of transfer RNAs. This Haloarcula marismortui (strain ATCC 43049 / DSM 3752 / JCM 8966 / VKM B-1809) (Halobacterium marismortui) protein is tRNA pseudouridine synthase A.